A 253-amino-acid chain; its full sequence is Triosephosphate isomerase (253 aa).

Residue N9–K11 participates in substrate binding. H95 (electrophile) is an active-site residue. The Proton acceptor role is filled by E167. Residues G173, S213, and G234 to G235 each bind substrate. A Phosphoserine modification is found at S213.

The protein belongs to the triosephosphate isomerase family. As to quaternary structure, homodimer.

It is found in the cytoplasm. It catalyses the reaction D-glyceraldehyde 3-phosphate = dihydroxyacetone phosphate. It participates in carbohydrate biosynthesis; gluconeogenesis. Its pathway is carbohydrate degradation; glycolysis; D-glyceraldehyde 3-phosphate from glycerone phosphate: step 1/1. Involved in the gluconeogenesis. Catalyzes stereospecifically the conversion of dihydroxyacetone phosphate (DHAP) to D-glyceraldehyde-3-phosphate (G3P). The polypeptide is Triosephosphate isomerase (Geobacillus thermodenitrificans (strain NG80-2)).